Reading from the N-terminus, the 125-residue chain is Ribosome-binding factor A (125 aa).

This sequence belongs to the RbfA family. Monomer. Binds 30S ribosomal subunits, but not 50S ribosomal subunits or 70S ribosomes.

The protein resides in the cytoplasm. In terms of biological role, one of several proteins that assist in the late maturation steps of the functional core of the 30S ribosomal subunit. Associates with free 30S ribosomal subunits (but not with 30S subunits that are part of 70S ribosomes or polysomes). Required for efficient processing of 16S rRNA. May interact with the 5'-terminal helix region of 16S rRNA. This Acidovorax sp. (strain JS42) protein is Ribosome-binding factor A.